The sequence spans 376 residues: Chaperone protein DnaJ (376 aa).

Positions 5–70 (DYYEVLGVGR…DKKAAYDQFG (66 aa)) constitute a J domain. Residues 132 to 210 (GLTKELRIPT…CHGDGRVEKS (79 aa)) form a CR-type zinc finger. Residues cysteine 145, cysteine 148, cysteine 162, cysteine 165, cysteine 184, cysteine 187, cysteine 198, and cysteine 201 each contribute to the Zn(2+) site. 4 CXXCXGXG motif repeats span residues 145–152 (CDLCDGSG), 162–169 (CTTCHGQG), 184–191 (CPTCHGRG), and 198–205 (CTKCHGDG).

This sequence belongs to the DnaJ family. In terms of assembly, homodimer. The cofactor is Zn(2+).

It is found in the cytoplasm. Participates actively in the response to hyperosmotic and heat shock by preventing the aggregation of stress-denatured proteins and by disaggregating proteins, also in an autonomous, DnaK-independent fashion. Unfolded proteins bind initially to DnaJ; upon interaction with the DnaJ-bound protein, DnaK hydrolyzes its bound ATP, resulting in the formation of a stable complex. GrpE releases ADP from DnaK; ATP binding to DnaK triggers the release of the substrate protein, thus completing the reaction cycle. Several rounds of ATP-dependent interactions between DnaJ, DnaK and GrpE are required for fully efficient folding. Also involved, together with DnaK and GrpE, in the DNA replication of plasmids through activation of initiation proteins. This Shewanella putrefaciens (strain CN-32 / ATCC BAA-453) protein is Chaperone protein DnaJ.